The sequence spans 125 residues: MAGRLSGVASRIMGGNGVVARSVGSSLRQRAGMGLPVGKHIVPDKPLSVNDELMWDNGTAFPEPCIDRIADTVGKYEALAWLSGGLGFFVGLGLLAVLNDKASKVPFTPRVYPYDNLRVELGGEP.

The transit peptide at 1–29 directs the protein to the mitochondrion; it reads MAGRLSGVASRIMGGNGVVARSVGSSLRQ. The helical transmembrane segment at 78–98 threads the bilayer; the sequence is ALAWLSGGLGFFVGLGLLAVL.

Belongs to the complex I NDUFB8 subunit family. Complex I is composed of at least 49 different subunits.

The protein localises to the mitochondrion inner membrane. Functionally, accessory subunit of the mitochondrial membrane respiratory chain NADH dehydrogenase (Complex I), that is believed not to be involved in catalysis. Complex I functions in the transfer of electrons from NADH to the respiratory chain. The immediate electron acceptor for the enzyme is believed to be ubiquinone. The polypeptide is NADH dehydrogenase [ubiquinone] 1 beta subcomplex subunit 8, mitochondrial (Arabidopsis thaliana (Mouse-ear cress)).